We begin with the raw amino-acid sequence, 556 residues long: Formate--tetrahydrofolate ligase 1 (556 aa).

Position 65–72 (65–72 (TPAGEGKS)) interacts with ATP.

The protein belongs to the formate--tetrahydrofolate ligase family.

It catalyses the reaction (6S)-5,6,7,8-tetrahydrofolate + formate + ATP = (6R)-10-formyltetrahydrofolate + ADP + phosphate. It participates in one-carbon metabolism; tetrahydrofolate interconversion. The chain is Formate--tetrahydrofolate ligase 1 from Streptococcus pyogenes serotype M18 (strain MGAS8232).